We begin with the raw amino-acid sequence, 450 residues long: UDP-N-acetylmuramoylalanine--D-glutamate ligase (450 aa).

118 to 124 is an ATP binding site; the sequence is GSNGKTT.

It belongs to the MurCDEF family.

It is found in the cytoplasm. The enzyme catalyses UDP-N-acetyl-alpha-D-muramoyl-L-alanine + D-glutamate + ATP = UDP-N-acetyl-alpha-D-muramoyl-L-alanyl-D-glutamate + ADP + phosphate + H(+). Its pathway is cell wall biogenesis; peptidoglycan biosynthesis. Functionally, cell wall formation. Catalyzes the addition of glutamate to the nucleotide precursor UDP-N-acetylmuramoyl-L-alanine (UMA). This is UDP-N-acetylmuramoylalanine--D-glutamate ligase from Halalkalibacterium halodurans (strain ATCC BAA-125 / DSM 18197 / FERM 7344 / JCM 9153 / C-125) (Bacillus halodurans).